A 268-amino-acid chain; its full sequence is 4-pyridoxolactonase (268 aa).

H96, H98, D100, H101, H185, D207, and H252 together coordinate Zn(2+). D100 functions as the Proton donor/acceptor in the catalytic mechanism.

Belongs to the metallo-beta-lactamase superfamily. In terms of assembly, homodimer. Zn(2+) is required as a cofactor.

It carries out the reaction 4-pyridoxolactone + H2O = 4-pyridoxate + H(+). It functions in the pathway cofactor degradation; B6 vitamer degradation; 4-pyridoxate from pyridoxal: step 2/2. Inhibited by Hg(2+). Involved in the degradation of pyridoxine or pyridoxamine (free, phosphate-unbound, forms of vitamin B6). Hydrolyzes 4-pyridoxolactone to 4-pyridoxic acid. Has lower activity toward N-hexanoyl-D,L-homoserine lactone, but is not active toward 5-pyridoxolactone and gamma-butyrolactone. In Mesorhizobium japonicum (strain LMG 29417 / CECT 9101 / MAFF 303099) (Mesorhizobium loti (strain MAFF 303099)), this protein is 4-pyridoxolactonase.